The chain runs to 345 residues: Cysteinyl leukotriene receptor 2 (345 aa).

Residues 1–43 (MERKLMSLLPSISLSEMEPNSTLGNHNSNRSCTTENFKREFYP) are Extracellular-facing. N-linked (GlcNAc...) asparagine glycans are attached at residues Asn-20 and Asn-29. Residues 44 to 64 (IVYLVIFIWGALGNGFSIYVF) form a helical membrane-spanning segment. At 65–73 (LKPYKKSTS) the chain is on the cytoplasmic side. Residues 74 to 94 (VNVFMLNLAISDLLFTITLPF) form a helical membrane-spanning segment. At 95–124 (RVDYYLRGSNXIFGDTPCRIMSYSMYVNMY) the chain is on the extracellular side. The cysteines at positions 112 and 188 are disulfide-linked. The chain crosses the membrane as a helical span at residues 125–145 (SSIYFLTVLSVVRFLATVHPF). At 146 to 154 (RLLHTTSIK) the chain is on the cytoplasmic side. The chain crosses the membrane as a helical span at residues 155–175 (NAWILCGVIWIFIMASSTVLL). Topologically, residues 176-205 (KNGSEQKDNVTLCLELNSNKVTKLKTMNYV) are extracellular. Asn-177 and Asn-184 each carry an N-linked (GlcNAc...) asparagine glycan. A helical membrane pass occupies residues 206–226 (ALVVGFVLPFGTLSICYLLII). Over 227–246 (RALLKVEVPESGLRLSHRKA) the chain is Cytoplasmic. Residues 247–267 (LITVIIALIIFLLCFLPYHVL) form a helical membrane-spanning segment. Residues 268-287 (RTLHLLEWKADKCKDRLHKA) lie on the Extracellular side of the membrane. The chain crosses the membrane as a helical span at residues 288–308 (VAVTLALAAANSCFNPFLYYF). Residues 309 to 345 (AGENFKDRLKSALRKGRPQKTRCGFSVCVWLKKETRV) are Cytoplasmic-facing.

It belongs to the G-protein coupled receptor 1 family.

It localises to the cell membrane. Its function is as follows. Receptor for cysteinyl leukotrienes. The response is mediated via a G-protein that activates a phosphatidylinositol-calcium second messenger system. The protein is Cysteinyl leukotriene receptor 2 (CYSLTR2) of Sus scrofa (Pig).